The following is a 313-amino-acid chain: Biotin synthase (313 aa).

The 231-residue stretch at 28-258 folds into the Radical SAM core domain; sequence NFGNDIELCS…LFPQARLRLS (231 aa). [4Fe-4S] cluster contacts are provided by cysteine 46, cysteine 50, and cysteine 53. Residues cysteine 90, cysteine 121, cysteine 181, and arginine 256 each coordinate [2Fe-2S] cluster.

This sequence belongs to the radical SAM superfamily. Biotin synthase family. In terms of assembly, homodimer. [4Fe-4S] cluster serves as cofactor. [2Fe-2S] cluster is required as a cofactor.

It carries out the reaction (4R,5S)-dethiobiotin + (sulfur carrier)-SH + 2 reduced [2Fe-2S]-[ferredoxin] + 2 S-adenosyl-L-methionine = (sulfur carrier)-H + biotin + 2 5'-deoxyadenosine + 2 L-methionine + 2 oxidized [2Fe-2S]-[ferredoxin]. The protein operates within cofactor biosynthesis; biotin biosynthesis; biotin from 7,8-diaminononanoate: step 2/2. Its function is as follows. Catalyzes the conversion of dethiobiotin (DTB) to biotin by the insertion of a sulfur atom into dethiobiotin via a radical-based mechanism. This chain is Biotin synthase, found in Francisella tularensis subsp. holarctica (strain FTNF002-00 / FTA).